We begin with the raw amino-acid sequence, 485 residues long: Ribulose bisphosphate carboxylase large chain 2 (485 aa).

Substrate is bound by residues N124 and T174. The Proton acceptor role is filled by K176. K178 is a substrate binding site. Mg(2+) contacts are provided by K202, D204, and E205. K202 carries the N6-carboxylysine modification. H294 functions as the Proton acceptor in the catalytic mechanism. Substrate-binding residues include R295, H327, and S379.

This sequence belongs to the RuBisCO large chain family. Type I subfamily. As to quaternary structure, heterohexadecamer of 8 large chains and 8 small chains. The cofactor is Mg(2+).

The enzyme catalyses 2 (2R)-3-phosphoglycerate + 2 H(+) = D-ribulose 1,5-bisphosphate + CO2 + H2O. The catalysed reaction is D-ribulose 1,5-bisphosphate + O2 = 2-phosphoglycolate + (2R)-3-phosphoglycerate + 2 H(+). RuBisCO catalyzes two reactions: the carboxylation of D-ribulose 1,5-bisphosphate, the primary event in carbon dioxide fixation, as well as the oxidative fragmentation of the pentose substrate. Both reactions occur simultaneously and in competition at the same active site. The polypeptide is Ribulose bisphosphate carboxylase large chain 2 (Rhodopseudomonas palustris (strain BisB5)).